Consider the following 146-residue polypeptide: Hemoglobin subunit beta (146 aa).

The 145-residue stretch at 2–146 folds into the Globin domain; sequence QWSDSERTII…VVMFLGKQYH (145 aa). The heme b site is built by His63 and His92.

Belongs to the globin family. As to quaternary structure, heterotetramer of two alpha chains and two beta chains. In terms of tissue distribution, red blood cells.

Involved in oxygen transport from the lung to the various peripheral tissues. This chain is Hemoglobin subunit beta (hbb), found in Artedidraco orianae (Barbeled plunderfish).